Here is a 68-residue protein sequence, read N- to C-terminus: Large ribosomal subunit protein uL29 (68 aa).

Belongs to the universal ribosomal protein uL29 family.

This is Large ribosomal subunit protein uL29 (rpl29) from Pyrococcus horikoshii (strain ATCC 700860 / DSM 12428 / JCM 9974 / NBRC 100139 / OT-3).